The chain runs to 264 residues: uncharacterized protein (264 aa).

The disordered stretch occupies residues glutamate 235–threonine 264. A compositionally biased stretch (acidic residues) spans serine 237–isoleucine 247.

This is an uncharacterized protein from Acanthamoeba polyphaga mimivirus (APMV).